The following is a 114-amino-acid chain: Phosphorelay protein LuxU (114 aa).

An HPt domain is found at 19–114; sequence GSDNVPVLLD…TRDAYRSWTN (96 aa). H58 bears the Phosphohistidine mark.

As to quaternary structure, monomer.

Functionally, phosphorelay protein which receives sensory signals from LuxN and LuxP and transmits them to LuxO, at low cell density. LuxN and LuxP transfer a phosphoryl group to LuxU on His-58 and this phosphoryl group is further transferred to LuxO. At high cell density, as LuxU could function to establish an equilibrium between the aspartyl-phosphate of LuxN and the aspartyl-phosphate of LuxO, LuxU transfers phosphate from LuxO to LuxN (and probably LuxP) and finally phosphate is drained from the system. The polypeptide is Phosphorelay protein LuxU (luxU) (Vibrio harveyi (Beneckea harveyi)).